The primary structure comprises 88 residues: Cytochrome c oxidase subunit 6B2 (88 aa).

The CHCH domain occupies 29–75 (TRNCYQNFLDYHRCIKTMNRRGKSTQPCEYYFRVYHSLCPISWVQRW). A Cx9C motif motif is present at residues 32 to 42 (CYQNFLDYHRC). Disulfide bonds link C32-C67 and C42-C56. The short motif at 56–67 (CEYYFRVYHSLC) is the Cx10C motif element.

The protein belongs to the cytochrome c oxidase subunit 6B family. As to quaternary structure, component of the cytochrome c oxidase (complex IV, CIV), a multisubunit enzyme composed of 14 subunits. The complex is composed of a catalytic core of 3 subunits MT-CO1, MT-CO2 and MT-CO3, encoded in the mitochondrial DNA, and 11 supernumerary subunits COX4I1 (or COX4I2), COX5A, COX5B, COX6A2 (or COX6A1), COX6B1 (or COX6B2), COX6C, COX7A1 (or COX7A2), COX7B, COX7C, COX8B and NDUFA4, which are encoded in the nuclear genome. The complex exists as a monomer or a dimer and forms supercomplexes (SCs) in the inner mitochondrial membrane with NADH-ubiquinone oxidoreductase (complex I, CI) and ubiquinol-cytochrome c oxidoreductase (cytochrome b-c1 complex, complex III, CIII), resulting in different assemblies (supercomplex SCI(1)III(2)IV(1) and megacomplex MCI(2)III(2)IV(2)). As to expression, testis specific.

Its subcellular location is the mitochondrion inner membrane. It participates in energy metabolism; oxidative phosphorylation. In terms of biological role, component of the cytochrome c oxidase, the last enzyme in the mitochondrial electron transport chain which drives oxidative phosphorylation. The respiratory chain contains 3 multisubunit complexes succinate dehydrogenase (complex II, CII), ubiquinol-cytochrome c oxidoreductase (cytochrome b-c1 complex, complex III, CIII) and cytochrome c oxidase (complex IV, CIV), that cooperate to transfer electrons derived from NADH and succinate to molecular oxygen, creating an electrochemical gradient over the inner membrane that drives transmembrane transport and the ATP synthase. Cytochrome c oxidase is the component of the respiratory chain that catalyzes the reduction of oxygen to water. Electrons originating from reduced cytochrome c in the intermembrane space (IMS) are transferred via the dinuclear copper A center (CU(A)) of subunit 2 and heme A of subunit 1 to the active site in subunit 1, a binuclear center (BNC) formed by heme A3 and copper B (CU(B)). The BNC reduces molecular oxygen to 2 water molecules using 4 electrons from cytochrome c in the IMS and 4 protons from the mitochondrial matrix. The protein is Cytochrome c oxidase subunit 6B2 (COX6B2) of Bos taurus (Bovine).